We begin with the raw amino-acid sequence, 372 residues long: Chaperone protein DnaJ (372 aa).

In terms of domain architecture, J spans 5-70; it reads DYYDLLEVGR…EKRAGYDRYG (66 aa). The segment at 134-212 adopts a CR-type zinc-finger fold; it reads GIQAPIHYVT…CGGSGRRRDE (79 aa). Positions 147, 150, 164, 167, 186, 189, 200, and 203 each coordinate Zn(2+). CXXCXGXG motif repeat units follow at residues 147 to 154, 164 to 171, 186 to 193, and 200 to 207; these read CDTCQGTG, CHTCQGSG, CTTCYGEG, and CKKCGGSG.

This sequence belongs to the DnaJ family. Homodimer. It depends on Zn(2+) as a cofactor.

The protein localises to the cytoplasm. Participates actively in the response to hyperosmotic and heat shock by preventing the aggregation of stress-denatured proteins and by disaggregating proteins, also in an autonomous, DnaK-independent fashion. Unfolded proteins bind initially to DnaJ; upon interaction with the DnaJ-bound protein, DnaK hydrolyzes its bound ATP, resulting in the formation of a stable complex. GrpE releases ADP from DnaK; ATP binding to DnaK triggers the release of the substrate protein, thus completing the reaction cycle. Several rounds of ATP-dependent interactions between DnaJ, DnaK and GrpE are required for fully efficient folding. Also involved, together with DnaK and GrpE, in the DNA replication of plasmids through activation of initiation proteins. The protein is Chaperone protein DnaJ of Wolbachia sp. subsp. Drosophila simulans (strain wRi).